The chain runs to 256 residues: Hydroxyacylglutathione hydrolase (256 aa).

Zn(2+)-binding residues include H57, H59, D61, H62, H115, D134, and H172.

This sequence belongs to the metallo-beta-lactamase superfamily. Glyoxalase II family. As to quaternary structure, monomer. Zn(2+) is required as a cofactor.

The enzyme catalyses an S-(2-hydroxyacyl)glutathione + H2O = a 2-hydroxy carboxylate + glutathione + H(+). It participates in secondary metabolite metabolism; methylglyoxal degradation; (R)-lactate from methylglyoxal: step 2/2. In terms of biological role, thiolesterase that catalyzes the hydrolysis of S-D-lactoyl-glutathione to form glutathione and D-lactic acid. The sequence is that of Hydroxyacylglutathione hydrolase from Jannaschia sp. (strain CCS1).